A 276-amino-acid chain; its full sequence is Small ribosomal subunit protein uS3 (276 aa).

A KH type-2 domain is found at 17–86; that stretch reads VDEYLAKELD…NPQIDVQDVG (70 aa). Residues 193-276 are disordered; that stretch reads FQINAPPKEP…AETHGDIQDR (84 aa). Over residues 214–227 the composition is skewed to low complexity; the sequence is EAEPSQAAETQEQQ. 2 stretches are compositionally biased toward basic and acidic residues: residues 228–240 and 258–276; these read AGEK…RLLD and PESR…IQDR.

Belongs to the universal ribosomal protein uS3 family. As to quaternary structure, part of the 30S ribosomal subunit.

Its function is as follows. Binds the lower part of the 30S subunit head. The polypeptide is Small ribosomal subunit protein uS3 (Methanothrix thermoacetophila (strain DSM 6194 / JCM 14653 / NBRC 101360 / PT) (Methanosaeta thermophila)).